Here is a 153-residue protein sequence, read N- to C-terminus: Small ribosomal subunit protein bS16 (153 aa).

Over residues 121–131 the composition is skewed to basic and acidic residues; it reads AEAAAKAKAEA. The disordered stretch occupies residues 121–153; it reads AEAAAKAKAEAEAAAAAEEAPAEEAAEEAPAED. The segment covering 140–153 has biased composition (acidic residues); sequence APAEEAAEEAPAED.

It belongs to the bacterial ribosomal protein bS16 family.

The protein is Small ribosomal subunit protein bS16 of Bifidobacterium longum (strain DJO10A).